We begin with the raw amino-acid sequence, 173 residues long: MTSFLCSDTEIESDGGISRCKKIKNKPLMEKKRRARINKSLSQLKQILIQDEHKNSIQHSKWEKADILEMAVEYLQQLRSAQPCSLSPSTSSISTPPTPKEEIRNIKVPLNPIASFLNPMMQQYVAYQQLAQLSMYTQLFNNPAGVPLRADAGVTAQSPELAEKLKIEDRSRV.

Residues Lys21 to Arg34 are basic motif. A bHLH domain is found at Lys21–Leu78. Positions Ala35 to Leu78 are helix-loop-helix motif. Low complexity predominate over residues Pro83–Thr95. Residues Pro83–Glu102 form a disordered region.

Expressed mostly in the seam (stem) cells and hypodermis (hyp7), but also to a lesser extent in the intestine.

It localises to the nucleus. Its function is as follows. Probable transcription factor. During development, required for cell fate specification, probably by promoting or repressing expression of genes involved in specific cell fate. Involved in specifying lineages derived from the epidermal stem cells of the lateral ectoderm, known as seam cells. Modulates symmetric divisions of seam cells, perhaps in concert with the Wnt signaling pathway. May repress expression of homeobox genes mab-5, egl-5 and lin-39. The sequence is that of Helix-loop-helix protein lin-22 from Caenorhabditis elegans.